We begin with the raw amino-acid sequence, 180 residues long: Bifunctional protein PyrR 1 (180 aa).

Substrate contacts are provided by residues 39–40, 103–111, arginine 136, and valine 160; these read TR and DDVLFTGRT. The PRPP-binding signature appears at 99–111; it reads VILVDDVLFTGRT.

It belongs to the purine/pyrimidine phosphoribosyltransferase family. PyrR subfamily. Homodimer and homohexamer; in equilibrium.

The catalysed reaction is UMP + diphosphate = 5-phospho-alpha-D-ribose 1-diphosphate + uracil. Its function is as follows. Regulates transcriptional attenuation of the pyrimidine nucleotide (pyr) operon by binding in a uridine-dependent manner to specific sites on pyr mRNA. This disrupts an antiterminator hairpin in the RNA and favors formation of a downstream transcription terminator, leading to a reduced expression of downstream genes. In terms of biological role, also displays a weak uracil phosphoribosyltransferase activity which is not physiologically significant. In Lactiplantibacillus plantarum (strain ATCC BAA-793 / NCIMB 8826 / WCFS1) (Lactobacillus plantarum), this protein is Bifunctional protein PyrR 1 (pyrR1).